The sequence spans 312 residues: Glyoxylate/hydroxypyruvate reductase A (312 aa).

The active site involves Arg227. Catalysis depends on His275, which acts as the Proton donor.

It belongs to the D-isomer specific 2-hydroxyacid dehydrogenase family. GhrA subfamily.

The protein resides in the cytoplasm. The catalysed reaction is glycolate + NADP(+) = glyoxylate + NADPH + H(+). It catalyses the reaction (R)-glycerate + NAD(+) = 3-hydroxypyruvate + NADH + H(+). It carries out the reaction (R)-glycerate + NADP(+) = 3-hydroxypyruvate + NADPH + H(+). Functionally, catalyzes the NADPH-dependent reduction of glyoxylate and hydroxypyruvate into glycolate and glycerate, respectively. This chain is Glyoxylate/hydroxypyruvate reductase A, found in Shigella dysenteriae serotype 1 (strain Sd197).